Here is a 175-residue protein sequence, read N- to C-terminus: Ribonuclease M5 (175 aa).

The Toprim domain maps to 3–83 (NEIIIVEGKS…DVDVFNAFVS (81 aa)). Positions 9, 57, and 59 each coordinate Mg(2+).

It belongs to the ribonuclease M5 family. The cofactor is Mg(2+).

It localises to the cytoplasm. It carries out the reaction Endonucleolytic cleavage of RNA, removing 21 and 42 nucleotides, respectively, from the 5'- and 3'-termini of a 5S-rRNA precursor.. Functionally, required for correct processing of both the 5' and 3' ends of 5S rRNA precursor. Cleaves both sides of a double-stranded region yielding mature 5S rRNA in one step. The protein is Ribonuclease M5 of Mesoplasma florum (strain ATCC 33453 / NBRC 100688 / NCTC 11704 / L1) (Acholeplasma florum).